The sequence spans 157 residues: MNQHSHKDYETVRIAVVRARWHADIVDQCVSAFEAEMADIGGDRFAVDVFDVPGAYEIPLHARTLAETGRYGAVLGTAFVVNGGIYRHEFVASAVIDGMMNVQLSTGVPVLSAVLTPHNYHDSAEHHRFFFEHFTVKGKEAARACVEILAAREKIAA.

5-amino-6-(D-ribitylamino)uracil contacts are provided by residues Trp21, 55–57, and 79–81; these read AYE and FVV. The active-site Proton donor is Arg87. Ser112 contributes to the 5-amino-6-(D-ribitylamino)uracil binding site. (2S)-2-hydroxy-3-oxobutyl phosphate is bound at residue His126.

It belongs to the DMRL synthase family. Homodecamer, arranged as a dimer of pentamers.

The catalysed reaction is (2S)-2-hydroxy-3-oxobutyl phosphate + 5-amino-6-(D-ribitylamino)uracil = 6,7-dimethyl-8-(1-D-ribityl)lumazine + phosphate + 2 H2O + H(+). It functions in the pathway cofactor biosynthesis; riboflavin biosynthesis; riboflavin from 2-hydroxy-3-oxobutyl phosphate and 5-amino-6-(D-ribitylamino)uracil: step 1/2. Catalyzes the formation of 6,7-dimethyl-8-ribityllumazine by condensation of 5-amino-6-(D-ribitylamino)uracil with 3,4-dihydroxy-2-butanone 4-phosphate. This is the penultimate step in the biosynthesis of riboflavin. The polypeptide is 6,7-dimethyl-8-ribityllumazine synthase 2 (ribH2) (Mesorhizobium japonicum (strain LMG 29417 / CECT 9101 / MAFF 303099) (Mesorhizobium loti (strain MAFF 303099))).